A 258-amino-acid polypeptide reads, in one-letter code: Type II restriction enzyme HindII (258 aa).

The enzyme catalyses Endonucleolytic cleavage of DNA to give specific double-stranded fragments with terminal 5'-phosphates.. In terms of biological role, a P subtype restriction enzyme that recognizes the double-stranded sequence 5'-GTYRAC-3' and cleaves after Y-3. The protein is Type II restriction enzyme HindII (hindIIR) of Haemophilus influenzae (strain ATCC 51907 / DSM 11121 / KW20 / Rd).